The chain runs to 165 residues: GPI-anchored protein LORELEI (165 aa).

Residues 1–20 (MELILLFFFLMALLVSLSSS) form the signal peptide. A required for its function in pollen tube reception region spans residues 82 to 93 (PYVSQINDMNSD). N137 carries an N-linked (GlcNAc...) asparagine glycan. S139 carries the GPI-anchor amidated serine lipid modification. Residues 140–165 (TADSTPRFISLLISAATAVFALLVLT) constitute a propeptide, removed in mature form.

As to quaternary structure, interacts with FER. As to expression, expressed in leaves, buds, flowers and stems. Highest expression in the synergid cells of the female gametophyte.

It localises to the cell membrane. In terms of biological role, female gametophyte-specific component of the signaling pathway required for fertilization. Required for reception of the pollen tube by the female gametophyte. Acts specifically at the synergid cell surface for pollen tube reception. Plays a role in double fertilization and early seed development. Component of the FER-regulated Rho GTPase signaling complex. Acts as a chaperone and coreceptor for FER. Required for localization of FER to the plasma membrane. This is GPI-anchored protein LORELEI (LRE) from Arabidopsis thaliana (Mouse-ear cress).